Consider the following 294-residue polypeptide: MQHLVDTSNFSDAQIVQLLHDAKTFKAQRPPQLLRDKLIITLFFEASTRTRSSFEVAAKRLGAAVVHLDPSRSSTKKGESLEDTFANLCAMDPDGVIIRHEENEAPGILADMQMTSVINAGAGNYAHPTQALLDLFTLMEHFEGNIEGKTIAIVGDIISSRVASSGIRLLRRMGMNVILVAPEPFMPQSDLPQYENLEDVLDKVDVIMSLRAQLERHASPIFDDYNEYARHYCITEERLGDRNILILHPGPVMRNIDISDEILEDPRCKVLTQVKNGVYMRMAILKLLLLDSNN.

Carbamoyl phosphate contacts are provided by R49 and T50. Residue K77 participates in L-aspartate binding. Residues R99, H127, and Q130 each contribute to the carbamoyl phosphate site. The L-aspartate site is built by R161 and R211. Residues G250 and P251 each contribute to the carbamoyl phosphate site.

The protein belongs to the aspartate/ornithine carbamoyltransferase superfamily. ATCase family. Heterododecamer (2C3:3R2) of six catalytic PyrB chains organized as two trimers (C3), and six regulatory PyrI chains organized as three dimers (R2).

It carries out the reaction carbamoyl phosphate + L-aspartate = N-carbamoyl-L-aspartate + phosphate + H(+). Its pathway is pyrimidine metabolism; UMP biosynthesis via de novo pathway; (S)-dihydroorotate from bicarbonate: step 2/3. In terms of biological role, catalyzes the condensation of carbamoyl phosphate and aspartate to form carbamoyl aspartate and inorganic phosphate, the committed step in the de novo pyrimidine nucleotide biosynthesis pathway. In Sulfurovum sp. (strain NBC37-1), this protein is Aspartate carbamoyltransferase catalytic subunit.